Reading from the N-terminus, the 131-residue chain is Profilin-1 (131 aa).

Belongs to the profilin family. As to quaternary structure, occurs in many kinds of cells as a complex with monomeric actin in a 1:1 ratio.

The protein localises to the cytoplasm. Its subcellular location is the cytoskeleton. Its function is as follows. Binds to actin and affects the structure of the cytoskeleton. At high concentrations, profilin prevents the polymerization of actin, whereas it enhances it at low concentrations. By binding to PIP2, it inhibits the formation of IP3 and DG. This is Profilin-1 (PRO1) from Triticum aestivum (Wheat).